Here is a 126-residue protein sequence, read N- to C-terminus: Small ribosomal subunit protein bS16 (126 aa).

A disordered region spans residues 87–126; that stretch reads ARSNPEKALPGKRALERVAEKKQKAEDAAAAAAAEASAAE. A compositionally biased stretch (basic and acidic residues) spans 99 to 113; sequence RALERVAEKKQKAED. Over residues 114–126 the composition is skewed to low complexity; it reads AAAAAAAEASAAE.

It belongs to the bacterial ribosomal protein bS16 family.

This is Small ribosomal subunit protein bS16 from Agrobacterium fabrum (strain C58 / ATCC 33970) (Agrobacterium tumefaciens (strain C58)).